A 460-amino-acid chain; its full sequence is MIWNTNLRWRLPVACLLLEVALIALFGVFVRYDMDADPHWVQEKVIKNLSTDLENEFYYRYPSFQDVHVMIFVGFGFLMTFLQRYGYSSVGFNFLLAAFGIQWALLMQGWLQSFDGRYILVDLENLINADFCVGSVCVAFGAVLGKVSPVQLLIMTLFQVTLFSINEYILLNLLEVKDSGGSMTIHAFGAYFGLTVAWILYRPNLHLSKERQSSTYHSDLFAMIGTLFLWMYWPSFNSAISNHGDAQHRAAINTYCSLAACVLTSVALSSALHRKGKLDMVHIQNATLAGGVGLGTVAELMVLPFGSLIIGFVCGIVSTLGFVYLTPFLESRLHIQDTCGVHNLHGIPGIIGGIAGAVTASIANIDLYGEEGLAYAFGIERSKLNWSPNMQGRFQAAGLFVSLAMALVGGVIVGVILRLPFWGQAPDENCFEDAVYWEIPKEPKSTALRSEDSSIKPPEP.

Over 1–9 (MIWNTNLRW) the chain is Cytoplasmic. A helical membrane pass occupies residues 10–30 (RLPVACLLLEVALIALFGVFV). The Extracellular segment spans residues 31-61 (RYDMDADPHWVQEKVIKNLSTDLENEFYYRY). Asparagine 48 carries an N-linked (GlcNAc...) asparagine glycan. The helical transmembrane segment at 62–82 (PSFQDVHVMIFVGFGFLMTFL) threads the bilayer. Residues 83-89 (QRYGYSS) are Cytoplasmic-facing. A helical transmembrane segment spans residues 90–110 (VGFNFLLAAFGIQWALLMQGW). The Extracellular portion of the chain corresponds to 111 to 125 (LQSFDGRYILVDLEN). Residues 126 to 145 (LINADFCVGSVCVAFGAVLG) form a helical membrane-spanning segment. Residues 146–151 (KVSPVQ) are Cytoplasmic-facing. Residues 152–174 (LLIMTLFQVTLFSINEYILLNLL) form a helical membrane-spanning segment. Over 175-179 (EVKDS) the chain is Extracellular. The helical transmembrane segment at 180–200 (GGSMTIHAFGAYFGLTVAWIL) threads the bilayer. Topologically, residues 201–219 (YRPNLHLSKERQSSTYHSD) are cytoplasmic. The chain crosses the membrane as a helical span at residues 220–240 (LFAMIGTLFLWMYWPSFNSAI). Over 241–251 (SNHGDAQHRAA) the chain is Extracellular. Residues 252 to 272 (INTYCSLAACVLTSVALSSAL) traverse the membrane as a helical segment. The Cytoplasmic portion of the chain corresponds to 273–285 (HRKGKLDMVHIQN). Residues 286 to 303 (ATLAGGVGLGTVAELMVL) traverse the membrane as a helical segment. The Extracellular portion of the chain corresponds to 304–306 (PFG). Residues 307-329 (SLIIGFVCGIVSTLGFVYLTPFL) traverse the membrane as a helical segment. The Cytoplasmic portion of the chain corresponds to 330–346 (ESRLHIQDTCGVHNLHG). The helical transmembrane segment at 347 to 367 (IPGIIGGIAGAVTASIANIDL) threads the bilayer. At 368-396 (YGEEGLAYAFGIERSKLNWSPNMQGRFQA) the chain is on the extracellular side. Residues 397–417 (AGLFVSLAMALVGGVIVGVIL) traverse the membrane as a helical segment. Residues 418 to 460 (RLPFWGQAPDENCFEDAVYWEIPKEPKSTALRSEDSSIKPPEP) lie on the Cytoplasmic side of the membrane.

The protein belongs to the ammonium transporter (TC 2.A.49) family. Rh subfamily. In terms of assembly, homotrimer. In terms of processing, N-glycosylated.

The protein resides in the apical cell membrane. It catalyses the reaction NH4(+)(in) = NH4(+)(out). The catalysed reaction is methylamine(out) = methylamine(in). It carries out the reaction CO2(out) = CO2(in). Ammonium transporter involved in the maintenance of acid-base homeostasis. Transports ammonium and its related derivative methylammonium across the plasma membrane of epithelial cells likely contributing to renal transepithelial ammonia transport and ammonia metabolism. Postulated to primarily mediate an electroneutral bidirectional transport of NH3 ammonia species according to a mechanism that implies interaction of an NH4(+) ion with acidic residues of the pore entry followed by dissociation of NH4(+) into NH3 and H(+). As a result NH3 transits through the central pore and is protonated on the extracellular side reforming NH4(+). May act as a CO2 channel providing for renal acid secretion. The chain is Ammonium transporter Rh type C (RHCG) from Bos taurus (Bovine).